We begin with the raw amino-acid sequence, 235 residues long: Centromere protein H (235 aa).

A disordered region spans residues 1 to 23 (MAGRLSESVGSGPGAEAETAADP). A coiled-coil region spans residues 125 to 145 (EIIQAHQQARVIRENLNDIRR).

Belongs to the CENP-H/MCM16 family. Component of the CENPA-HI complex, at least composed of CENPH, CENPI, CENPK, CENPL, CENPM, CENPO and CENPP. Interacts with NDC80.

Its subcellular location is the nucleus. It localises to the chromosome. The protein resides in the centromere. It is found in the kinetochore. In terms of biological role, component of the CENPA-HI complex, a centromeric complex involved in assembly of kinetochore proteins, mitotic progression and chromosome segregation. Required for the localization of CENPC but not CENPA to the centromere. It however may be involved in incorporation of newly synthesized CENPA into centromeres via its interaction with the CENPA-NAC complex. This chain is Centromere protein H (CENPH), found in Gallus gallus (Chicken).